We begin with the raw amino-acid sequence, 314 residues long: Ferrochelatase (314 aa).

Residues His184 and Glu259 each contribute to the Fe cation site.

Belongs to the ferrochelatase family.

Its subcellular location is the cytoplasm. It carries out the reaction heme b + 2 H(+) = protoporphyrin IX + Fe(2+). It participates in porphyrin-containing compound metabolism; protoheme biosynthesis; protoheme from protoporphyrin-IX: step 1/1. Functionally, catalyzes the ferrous insertion into protoporphyrin IX. The polypeptide is Ferrochelatase (Chlamydia trachomatis serovar L2 (strain ATCC VR-902B / DSM 19102 / 434/Bu)).